Consider the following 616-residue polypeptide: Probable Xaa-Pro aminopeptidase P (616 aa).

Mn(2+)-binding residues include D413, D424, E522, and E536.

The protein belongs to the peptidase M24B family. Mn(2+) serves as cofactor.

It carries out the reaction Release of any N-terminal amino acid, including proline, that is linked to proline, even from a dipeptide or tripeptide.. Catalyzes the removal of a penultimate prolyl residue from the N-termini of peptides. This Paracoccidioides brasiliensis (strain Pb03) protein is Probable Xaa-Pro aminopeptidase P (AMPP).